Consider the following 252-residue polypeptide: Enolase-phosphatase E1 (252 aa).

2 residues coordinate Mg(2+): aspartate 18 and glutamate 20. Residues serine 149–serine 150 and lysine 184 each bind substrate. Aspartate 209 contacts Mg(2+).

It belongs to the HAD-like hydrolase superfamily. MasA/MtnC family. Monomer. Mg(2+) serves as cofactor.

The protein resides in the cytoplasm. It is found in the nucleus. It carries out the reaction 5-methylsulfanyl-2,3-dioxopentyl phosphate + H2O = 1,2-dihydroxy-5-(methylsulfanyl)pent-1-en-3-one + phosphate. It functions in the pathway amino-acid biosynthesis; L-methionine biosynthesis via salvage pathway; L-methionine from S-methyl-5-thio-alpha-D-ribose 1-phosphate: step 3/6. It participates in amino-acid biosynthesis; L-methionine biosynthesis via salvage pathway; L-methionine from S-methyl-5-thio-alpha-D-ribose 1-phosphate: step 4/6. Its function is as follows. Bifunctional enzyme that catalyzes the enolization of 2,3-diketo-5-methylthiopentyl-1-phosphate (DK-MTP-1-P) into the intermediate 2-hydroxy-3-keto-5-methylthiopentenyl-1-phosphate (HK-MTPenyl-1-P), which is then dephosphorylated to form the acireductone 1,2-dihydroxy-3-keto-5-methylthiopentene (DHK-MTPene). In Naegleria gruberi (Amoeba), this protein is Enolase-phosphatase E1.